Here is a 547-residue protein sequence, read N- to C-terminus: Chaperonin GroEL (547 aa).

Residues T30–P33, K51, D87–T91, G415, N479–A481, and D495 contribute to the ATP site.

This sequence belongs to the chaperonin (HSP60) family. In terms of assembly, forms a cylinder of 14 subunits composed of two heptameric rings stacked back-to-back. Interacts with the co-chaperonin GroES.

The protein resides in the cytoplasm. The enzyme catalyses ATP + H2O + a folded polypeptide = ADP + phosphate + an unfolded polypeptide.. Together with its co-chaperonin GroES, plays an essential role in assisting protein folding. The GroEL-GroES system forms a nano-cage that allows encapsulation of the non-native substrate proteins and provides a physical environment optimized to promote and accelerate protein folding. The protein is Chaperonin GroEL of Pseudomonas aeruginosa (strain UCBPP-PA14).